The primary structure comprises 336 residues: Phospho-N-acetylmuramoyl-pentapeptide-transferase (336 aa).

Helical transmembrane passes span 3 to 23, 53 to 73, 78 to 98, 118 to 138, 143 to 163, 174 to 194, 200 to 220, 226 to 246, 251 to 271, and 316 to 336; these read LTLIAAIISFMVSAFTMPYFI, GGTVFLLVATAVSLLVSLFSI, SLALISGILSIVVIYGIIGFL, LALQLAGGLMFYFLHVSPSGI, VFGYQLSLGIFYLFFVLFWVV, GIDGLASISVVISLVTYGVIA, FDVLLLIGTMIGALLGFFCFN, VFMGDVGSLALGAMLAAISIA, WTLLIIGIVYVLETSSVMLQV, and AFLWGVGSLASLLVLAILYVF.

This sequence belongs to the glycosyltransferase 4 family. MraY subfamily. The cofactor is Mg(2+).

It localises to the cell membrane. The catalysed reaction is UDP-N-acetyl-alpha-D-muramoyl-L-alanyl-gamma-D-glutamyl-L-lysyl-D-alanyl-D-alanine + di-trans,octa-cis-undecaprenyl phosphate = Mur2Ac(oyl-L-Ala-gamma-D-Glu-L-Lys-D-Ala-D-Ala)-di-trans,octa-cis-undecaprenyl diphosphate + UMP. The protein operates within cell wall biogenesis; peptidoglycan biosynthesis. Catalyzes the initial step of the lipid cycle reactions in the biosynthesis of the cell wall peptidoglycan: transfers peptidoglycan precursor phospho-MurNAc-pentapeptide from UDP-MurNAc-pentapeptide onto the lipid carrier undecaprenyl phosphate, yielding undecaprenyl-pyrophosphoryl-MurNAc-pentapeptide, known as lipid I. In Streptococcus pyogenes serotype M4 (strain MGAS10750), this protein is Phospho-N-acetylmuramoyl-pentapeptide-transferase.